The following is a 427-amino-acid chain: Septin-6 (427 aa).

Ala-2 carries the post-translational modification N-acetylalanine. Ser-27 carries the phosphoserine modification. One can recognise a Septin-type G domain in the interval 39 to 305 (QGFCFNILCV…ELYRRCKLEE (267 aa)). A G1 motif region spans residues 49–56 (GETGLGKS). GTP contacts are provided by residues 49–56 (GETGLGKS), Gly-104, 185–193 (KSDAISKSE), Gly-239, and Arg-254. The tract at residues 101–104 (STVG) is G3 motif. The tract at residues 184 to 187 (AKSD) is G4 motif. A coiled-coil region spans residues 321 to 416 (QETYEAKRNE…QSQGSQAGGS (96 aa)). Lys-367 bears the N6-acetyllysine mark. The segment at 405–427 (LLQSQGSQAGGSQTLKRDKEKKN) is disordered. Positions 407-417 (QSQGSQAGGSQ) are enriched in low complexity. Ser-416 carries the post-translational modification Phosphoserine. Thr-418 bears the Phosphothreonine mark.

Belongs to the TRAFAC class TrmE-Era-EngA-EngB-Septin-like GTPase superfamily. Septin GTPase family. Septins polymerize into heterooligomeric protein complexes that form filaments, and associate with cellular membranes, actin filaments and microtubules. GTPase activity is required for filament formation. Filaments are assembled from asymmetrical heterotrimers, composed of SEPTIN2, SEPTIN6 and SEPTIN7 that associate head-to-head to form a hexameric unit. Within the trimer, directly interacts with SEPTIN2 and SEPTIN7. Also interacts with SEPTIN9 and SEPTIN12. Interaction with SEPTIN12 alters filament structure. Component of a septin core octameric complex consisting of SEPTIN12, SEPTIN7, SEPTIN6 and SEPTIN2 or SEPTIN4 in the order 12-7-6-2-2-6-7-12 or 12-7-6-4-4-6-7-12 and located in the sperm annulus. Interacts with SOCS7. Interacts with HNRNPA1.

It localises to the cytoplasm. Its subcellular location is the cytoskeleton. The protein localises to the spindle. The protein resides in the chromosome. It is found in the centromere. It localises to the kinetochore. Its subcellular location is the cleavage furrow. The protein localises to the midbody. The protein resides in the cell projection. It is found in the cilium. It localises to the flagellum. Functionally, filament-forming cytoskeletal GTPase. Required for normal organization of the actin cytoskeleton. Involved in cytokinesis. Forms a filamentous structure with SEPTIN12, SEPTIN6, SEPTIN2 and probably SEPTIN4 at the sperm annulus which is required for the structural integrity and motility of the sperm tail during postmeiotic differentiation. The protein is Septin-6 of Bos taurus (Bovine).